The sequence spans 917 residues: Hexokinase-2 (917 aa).

At Met1 the chain carries N-acetylmethionine. The tract at residues 1-16 (MIASHLLAYFFTELNH) is mitochondrial-binding peptide (MBP). Hexokinase domains are found at residues 16–458 (HDQV…MVTA) and 464–906 (AYQH…LITA). ATP-binding positions include Arg30 and 84-89 (DLGGTN). Residues 73–207 (DGTEHGEFLA…DFDIDIVAMV (135 aa)) are hexokinase small subdomain 1. Residue 84–88 (DLGGT) coordinates D-glucose 6-phosphate. D-glucose contacts are provided by residues 155 to 156 (SF), 172 to 173 (TK), 208 to 209 (ND), Asn235, Glu260, and 291 to 294 (QLFE). Residues 208–447 (NDTVATMMTC…CDIRFLCSED (240 aa)) form a hexokinase large subdomain 1 region. D-glucose 6-phosphate is bound at residue Asp209. 413–415 (DGS) contributes to the D-glucose 6-phosphate binding site. 425 to 426 (KR) contributes to the ATP binding site. Residues Ser449 and 532–536 (DLGGT) contribute to the D-glucose 6-phosphate site. Residues 521 to 655 (DGTEKGDFLA…EFDLDVVAVV (135 aa)) are hexokinase small subdomain 2. Residue 532 to 537 (DLGGTN) coordinates ATP. D-glucose-binding positions include 603 to 604 (SF), 620 to 621 (TK), and 656 to 657 (ND). Residues 656-895 (NDTVGTMMTC…CDVSFLESED (240 aa)) form a hexokinase large subdomain 2 region. D-glucose 6-phosphate is bound by residues Asp657 and Thr680. Thr680 contacts ATP. D-glucose contacts are provided by residues 682–683 (SN), Glu708, and 739–742 (QRFE). Residues 747–748 (GM), 784–788 (TKFLS), and 863–867 (TLYKL) each bind ATP. Residues 861–863 (DGT) and Ser897 contribute to the D-glucose 6-phosphate site.

Belongs to the hexokinase family. In terms of assembly, monomer. Interacts with TIGAR; the interaction increases hexokinase activity in a hypoxia- and HIF1A-dependent manner.

The protein resides in the mitochondrion outer membrane. It localises to the cytoplasm. It is found in the cytosol. The catalysed reaction is a D-hexose + ATP = a D-hexose 6-phosphate + ADP + H(+). It catalyses the reaction D-fructose + ATP = D-fructose 6-phosphate + ADP + H(+). It carries out the reaction D-glucose + ATP = D-glucose 6-phosphate + ADP + H(+). It functions in the pathway carbohydrate metabolism; hexose metabolism. Its pathway is carbohydrate degradation; glycolysis; D-glyceraldehyde 3-phosphate and glycerone phosphate from D-glucose: step 1/4. With respect to regulation, hexokinase activity is specifically inhibited by 2,6-disubstituted glucosamines. Its function is as follows. Catalyzes the phosphorylation of hexose, such as D-glucose and D-fructose, to hexose 6-phosphate (D-glucose 6-phosphate and D-fructose 6-phosphate, respectively). Mediates the initial step of glycolysis by catalyzing phosphorylation of D-glucose to D-glucose 6-phosphate. Plays a key role in maintaining the integrity of the outer mitochondrial membrane by preventing the release of apoptogenic molecules from the intermembrane space and subsequent apoptosis. The protein is Hexokinase-2 of Equus zebra (Mountain zebra).